Reading from the N-terminus, the 423-residue chain is uncharacterized protein (423 aa).

Mg(2+) is bound by residues lysine 181, aspartate 183, and glutamate 184. Lysine 181 bears the N6-carboxylysine mark.

It belongs to the RuBisCO large chain family. Type IV subfamily. Mg(2+) is required as a cofactor.

May be involved in sulfur metabolism and oxidative stress response. Does not show RuBisCO activity. This is an uncharacterized protein from Bordetella bronchiseptica (strain ATCC BAA-588 / NCTC 13252 / RB50) (Alcaligenes bronchisepticus).